We begin with the raw amino-acid sequence, 1639 residues long: Protein GFS12 (1639 aa).

The Protein kinase 1 domain maps to 206-294 (LEEKSKLRCL…IRPSNILLSD (89 aa)). The region spanning 336–608 (LKISSHLDWQ…FHGFGVDNKR (273 aa)) is the BEACH domain. Positions 715-788 (IAGDIFSIGC…AKSLLDSPYF (74 aa)) constitute a Protein kinase 2 domain. WD repeat units follow at residues 1290–1333 (AHHG…CVSS) and 1336–1373 (AHEEVVNDIGILSSTGKVASCDGTIHVWNSQTGKLISL). Low complexity predominate over residues 1377-1398 (SPSDQDQASSDPSSKNNSNPCN). Residues 1377-1399 (SPSDQDQASSDPSSKNNSNPCNR) are disordered. WD repeat units lie at residues 1465 to 1499 (ALCSGGSQTKHGDGASVSPSWIAAGFSSGQCRLFD), 1511 to 1549 (AHDGYVTKLVAPESHLLVSSSLDKTLRIWDLRKSWTPQP), and 1609 to 1639 (RVKSDLSTICVLPFSRLFIVGAHDGHLRICC).

The protein belongs to the protein kinase superfamily. Tyr protein kinase family. In terms of assembly, interacts (via protein kinase 2 domain) with BCHC1 (via PH-BEACH domain). In terms of tissue distribution, weakly expressed in the cotyledons of germinating seedlings. Restricted to the vascular tissues of cotyledons. Detected in root tips, apical meristem, young flower buds and receptacles.

In terms of biological role, may act predominantly to suppress BCHC1, which itself is a negative factor in protein storage vacuole (PSV) trafficking regulation and plant effector triggered immunity (ETI). Required for ETI, but not for cell death. The sequence is that of Protein GFS12 from Arabidopsis thaliana (Mouse-ear cress).